Consider the following 453-residue polypeptide: NADH-quinone oxidoreductase subunit D (453 aa).

Over residues 1-21 (MKDTETRPGRHRAPEPAHPEQ) the composition is skewed to basic and acidic residues. The disordered stretch occupies residues 1–30 (MKDTETRPGRHRAPEPAHPEQPDTTGDTVV).

The protein belongs to the complex I 49 kDa subunit family. As to quaternary structure, NDH-1 is composed of 14 different subunits. Subunits NuoB, C, D, E, F, and G constitute the peripheral sector of the complex.

It is found in the cell membrane. The catalysed reaction is a quinone + NADH + 5 H(+)(in) = a quinol + NAD(+) + 4 H(+)(out). Its function is as follows. NDH-1 shuttles electrons from NADH, via FMN and iron-sulfur (Fe-S) centers, to quinones in the respiratory chain. The immediate electron acceptor for the enzyme in this species is believed to be a menaquinone. Couples the redox reaction to proton translocation (for every two electrons transferred, four hydrogen ions are translocated across the cytoplasmic membrane), and thus conserves the redox energy in a proton gradient. The chain is NADH-quinone oxidoreductase subunit D from Nocardia farcinica (strain IFM 10152).